Consider the following 315-residue polypeptide: Outer membrane protease OmpP (315 aa).

A signal peptide spans 1-23; it reads MQTKLLAIMLAAPVVFSSQEASA. Residues D103, D105, D230, and H232 contribute to the active site.

Belongs to the peptidase A26 family.

Its subcellular location is the cell outer membrane. In terms of biological role, protease; also acts as a receptor for bacteriophage Ox2. This is Outer membrane protease OmpP (ompP) from Escherichia coli (strain K12).